A 98-amino-acid polypeptide reads, in one-letter code: NADH-ubiquinone oxidoreductase chain 4L (98 aa).

3 consecutive transmembrane segments (helical) span residues 1 to 21 (MSLTYMNMFMAFTISLLGLLL), 29 to 49 (SLLCLEGMMLSLFVMMTMIIL), and 61 to 81 (IILLVFAACEAALGLSLLVMV).

Belongs to the complex I subunit 4L family. As to quaternary structure, core subunit of respiratory chain NADH dehydrogenase (Complex I) which is composed of 45 different subunits.

It localises to the mitochondrion inner membrane. The enzyme catalyses a ubiquinone + NADH + 5 H(+)(in) = a ubiquinol + NAD(+) + 4 H(+)(out). Core subunit of the mitochondrial membrane respiratory chain NADH dehydrogenase (Complex I) which catalyzes electron transfer from NADH through the respiratory chain, using ubiquinone as an electron acceptor. Part of the enzyme membrane arm which is embedded in the lipid bilayer and involved in proton translocation. This chain is NADH-ubiquinone oxidoreductase chain 4L (MT-ND4L), found in Platyrrhinus brachycephalus (Short-headed broad-nosed bat).